We begin with the raw amino-acid sequence, 458 residues long: Cysteine--tRNA ligase (458 aa).

Cys-29 provides a ligand contact to Zn(2+). Residues Met-31–His-41 carry the 'HIGH' region motif. Zn(2+)-binding residues include Cys-213, His-238, and Glu-242. A 'KMSKS' region motif is present at residues Lys-270–Ser-274. Residue Lys-273 coordinates ATP.

This sequence belongs to the class-I aminoacyl-tRNA synthetase family. As to quaternary structure, monomer. Zn(2+) is required as a cofactor.

It is found in the cytoplasm. The enzyme catalyses tRNA(Cys) + L-cysteine + ATP = L-cysteinyl-tRNA(Cys) + AMP + diphosphate. The chain is Cysteine--tRNA ligase from Acidovorax ebreus (strain TPSY) (Diaphorobacter sp. (strain TPSY)).